A 73-amino-acid polypeptide reads, in one-letter code: Protein SlyX homolog (73 aa).

It belongs to the SlyX family.

The polypeptide is Protein SlyX homolog (Pasteurella multocida (strain Pm70)).